We begin with the raw amino-acid sequence, 509 residues long: Ribonuclease Y (509 aa).

Residues 1-21 (MIILVAVVTAVISFGLGYVVA) form a helical membrane-spanning segment. One can recognise a KH domain in the interval 199–259 (TVSTVSLPSD…IRREIARLTL (61 aa)). The HD domain occupies 325–418 (VLDHSIEVAQ…VAAADALSAA (94 aa)).

It belongs to the RNase Y family.

It is found in the cell membrane. Endoribonuclease that initiates mRNA decay. The polypeptide is Ribonuclease Y (Pseudothermotoga lettingae (strain ATCC BAA-301 / DSM 14385 / NBRC 107922 / TMO) (Thermotoga lettingae)).